We begin with the raw amino-acid sequence, 430 residues long: Solanesyl-diphosphate synthase 1, mitochondrial (430 aa).

Residues 1–31 constitute a mitochondrion transit peptide; sequence MSWRWALARRVAALGATSGGGDGATAQAQRL. Lys-133, Arg-136, and His-182 together coordinate isopentenyl diphosphate. 2 residues coordinate Mg(2+): Asp-189 and Asp-193. Arg-198 is an an all-trans-polyprenyl diphosphate binding site. Arg-199 provides a ligand contact to isopentenyl diphosphate. An all-trans-polyprenyl diphosphate is bound by residues Lys-275, Thr-276, Gln-313, and Lys-330.

Belongs to the FPP/GGPP synthase family. As to quaternary structure, homodimer. Requires Mg(2+) as cofactor. In terms of tissue distribution, expressed in leaves, stems and roots. Highest expression in roots.

It localises to the mitochondrion. It carries out the reaction 7 isopentenyl diphosphate + (2E)-geranyl diphosphate = all-trans-nonaprenyl diphosphate + 7 diphosphate. It functions in the pathway cofactor biosynthesis; ubiquinone biosynthesis. Functionally, involved in the supply of solanesyl diphosphate for ubiquinone-9 (UQ-9) biosynthesis in mitochondria. Farnesyl diphosphate is the preferred substrate. The protein is Solanesyl-diphosphate synthase 1, mitochondrial of Oryza sativa subsp. japonica (Rice).